We begin with the raw amino-acid sequence, 153 residues long: E3 ubiquitin-protein ligase AIRP1 (153 aa).

The RING-type; atypical zinc finger occupies 104–145; it reads CPICLEEYEIDNPKLLTKCGHDFHLACILAWMERSEACPVCD.

It is found in the cytoplasm. Its subcellular location is the cytosol. It carries out the reaction S-ubiquitinyl-[E2 ubiquitin-conjugating enzyme]-L-cysteine + [acceptor protein]-L-lysine = [E2 ubiquitin-conjugating enzyme]-L-cysteine + N(6)-ubiquitinyl-[acceptor protein]-L-lysine.. Functionally, possesses E3 ubiquitin-protein ligase activity in vitro when associated with the E2 enzyme UBC8 in vitro. Plays combinatory roles with AIRP2 in the positive regulation of the abscisic acid-mediated drought stress response. This chain is E3 ubiquitin-protein ligase AIRP1, found in Arabidopsis thaliana (Mouse-ear cress).